We begin with the raw amino-acid sequence, 157 residues long: 2-C-methyl-D-erythritol 2,4-cyclodiphosphate synthase (157 aa).

Positions 8 and 10 each coordinate a divalent metal cation. 4-CDP-2-C-methyl-D-erythritol 2-phosphate-binding positions include 8 to 10 (DVH) and 34 to 35 (HS). His42 is an a divalent metal cation binding site. Residues 56–58 (DIG), 132–135 (TTNE), Phe139, and Arg142 each bind 4-CDP-2-C-methyl-D-erythritol 2-phosphate.

It belongs to the IspF family. Homotrimer. It depends on a divalent metal cation as a cofactor.

It carries out the reaction 4-CDP-2-C-methyl-D-erythritol 2-phosphate = 2-C-methyl-D-erythritol 2,4-cyclic diphosphate + CMP. It functions in the pathway isoprenoid biosynthesis; isopentenyl diphosphate biosynthesis via DXP pathway; isopentenyl diphosphate from 1-deoxy-D-xylulose 5-phosphate: step 4/6. In terms of biological role, involved in the biosynthesis of isopentenyl diphosphate (IPP) and dimethylallyl diphosphate (DMAPP), two major building blocks of isoprenoid compounds. Catalyzes the conversion of 4-diphosphocytidyl-2-C-methyl-D-erythritol 2-phosphate (CDP-ME2P) to 2-C-methyl-D-erythritol 2,4-cyclodiphosphate (ME-CPP) with a corresponding release of cytidine 5-monophosphate (CMP). The chain is 2-C-methyl-D-erythritol 2,4-cyclodiphosphate synthase from Symbiobacterium thermophilum (strain DSM 24528 / JCM 14929 / IAM 14863 / T).